We begin with the raw amino-acid sequence, 212 residues long: MSPQIIELLIFAIIAFYIINKLITTLGSTSEEEQIKNKSYFGEPVIKDVTYSTVKDHKKVERNVSRTQDIKVFKDIIVENNINAVVDGIEQIHKRLYSFDPVKFINNAKTAFQMIIEAAYKKDVKELSELIDKRYLEEFEKIIPSYGDFFDSSALSAKYSEIYMFGNNIFIKLLFQGKNVVDKIEDLQEEWTFTRNANTKEVDWFLSNIERV.

This is an uncharacterized protein from Rickettsia prowazekii (strain Madrid E).